The sequence spans 753 residues: Neuroendocrine convertase 1 (753 aa).

An N-terminal signal peptide occupies residues 1 to 27 (MEQRGWTLQCTAFAFFCVWCALNSVKA). Positions 28–110 (KRQFVNEWAA…QQYEKERSKR (83 aa)) are excised as a propeptide. One can recognise a Peptidase S8 domain in the interval 129–450 (QWYLQDTRMT…FGLLNAKALV (322 aa)). Active-site charge relay system residues include Asp167 and His208. 2 disulfides stabilise this stretch: Cys225–Cys374 and Cys317–Cys347. Ser382 acts as the Charge relay system in catalysis. N-linked (GlcNAc...) asparagine glycosylation occurs at Asn401. A P/Homo B domain is found at 460-597 (NVPEKKECVV…KLILHGTSSQ (138 aa)). Cys467 and Cys494 are joined by a disulfide. The span at 633-651 (QKSLNGNLLVPKNSSSSNV) shows a compositional bias: polar residues. Residues 633–663 (QKSLNGNLLVPKNSSSSNVEGRRDEQVQGTP) form a disordered region. An N-linked (GlcNAc...) asparagine glycan is attached at Asn645.

Belongs to the peptidase S8 family. Furin subfamily. Ca(2+) is required as a cofactor.

The protein resides in the cytoplasmic vesicle. It localises to the secretory vesicle. The catalysed reaction is Release of protein hormones, neuropeptides and renin from their precursors, generally by hydrolysis of -Lys-Arg-|- bonds.. Functionally, involved in the processing of hormone and other protein precursors at sites comprised of pairs of basic amino acid residues. Substrates include POMC, renin, enkephalin, dynorphin, somatostatin, insulin and AGRP. This is Neuroendocrine convertase 1 (Pcsk1) from Mus musculus (Mouse).